Reading from the N-terminus, the 459-residue chain is Heat stress transcription factor A-4d (459 aa).

Positions 127-189 (AESERRELEE…QKNIVASLCE (63 aa)) form a coiled coil. Positions 141–191 (LKYEKSILVADLQRQNQQQYVINWQMQAMEGRLVAMEQRQKNIVASLCEML) are hydrophobic repeat HR-A/B. A Nuclear localization signal motif is present at residues 209–213 (SKKRR). Positions 364-388 (YPTQADVNSEIASSTDTSQDGTSET) are enriched in polar residues. Positions 364 to 398 (YPTQADVNSEIASSTDTSQDGTSETEASHGPTNDV) are disordered. The AHA motif lies at 397–406 (DVFWERFLTE).

This sequence belongs to the HSF family. Class A subfamily. Homotrimer. In terms of processing, exhibits temperature-dependent phosphorylation.

Its subcellular location is the nucleus. Functionally, transcriptional regulator that specifically binds DNA of heat shock promoter elements (HSE). The polypeptide is Heat stress transcription factor A-4d (HSFA4D) (Oryza sativa subsp. japonica (Rice)).